The primary structure comprises 246 residues: Proteasome subunit alpha type-6 (246 aa).

The protein belongs to the peptidase T1A family. In terms of assembly, the 26S proteasome consists of a 20S proteasome core and two 19S regulatory subunits. The 20S proteasome core is composed of 28 subunits that are arranged in four stacked rings, resulting in a barrel-shaped structure. The two end rings are each formed by seven alpha subunits, and the two central rings are each formed by seven beta subunits. The catalytic chamber with the active sites is on the inside of the barrel.

The protein localises to the cytoplasm. The protein resides in the nucleus. The proteasome is a multicatalytic proteinase complex which is characterized by its ability to cleave peptides with Arg, Phe, Tyr, Leu, and Glu adjacent to the leaving group at neutral or slightly basic pH. The proteasome has an ATP-dependent proteolytic activity. This chain is Proteasome subunit alpha type-6 (PAA1), found in Nicotiana tabacum (Common tobacco).